The following is a 243-amino-acid chain: Aquaporin SIP1-2 (243 aa).

Transmembrane regions (helical) follow at residues 9–29 (AAAADAVVTFLWVLCVSTLGA) and 45–65 (FALLVTVSLLSVLLFVFNILC). The NPA 1 signature appears at 74 to 76 (NPT). 3 helical membrane-spanning segments follow: residues 98–118 (LPAQAAGAVGGALAISELMPA), 136–156 (GAGAELVLTFVITLAVLLIIV), and 163–183 (IIKTWMISICTLCLVLSGAAY). An NPA 2 motif is present at residues 189 to 191 (NPA). A helical membrane pass occupies residues 211–231 (VYWICPFIGAILAAWIFRAMF).

Belongs to the MIP/aquaporin (TC 1.A.8) family. SIP (TC 1.A.8.10) subfamily.

The protein localises to the membrane. In terms of biological role, aquaporins facilitate the transport of water and small neutral solutes across cell membranes. This chain is Aquaporin SIP1-2 (SIP1-2), found in Zea mays (Maize).